We begin with the raw amino-acid sequence, 101 residues long: Apolipoprotein C-II (101 aa).

The signal sequence occupies residues 1-22 (MGTRFLLALCLVLLVLGFEVQG). The tract at residues 66-74 (AVDEKLRDL) is lipid binding. The interval 78–101 (STAAMSTYTGIFTDQVLSVLKGEE) is lipoprotein lipase cofactor.

Belongs to the apolipoprotein C2 family. In terms of processing, proapolipoprotein C-II is synthesized as a sialic acid containing glycoprotein which is subsequently desialylated prior to its proteolytic processing. Proapolipoprotein C-II, the major form found in plasma undergoes proteolytic cleavage of its N-terminal hexapeptide to generate apolipoprotein C-II, which occurs as the minor form in plasma.

It localises to the secreted. In terms of biological role, component of chylomicrons, very low-density lipoproteins (VLDL), low-density lipoproteins (LDL), and high-density lipoproteins (HDL) in plasma. Plays an important role in lipoprotein metabolism as an activator of lipoprotein lipase. Both proapolipoprotein C-II and apolipoprotein C-II can activate lipoprotein lipase. The polypeptide is Apolipoprotein C-II (APOC2) (Colobus guereza (Mantled guereza)).